The chain runs to 120 residues: Large ribosomal subunit protein bL20 (120 aa).

This sequence belongs to the bacterial ribosomal protein bL20 family.

Functionally, binds directly to 23S ribosomal RNA and is necessary for the in vitro assembly process of the 50S ribosomal subunit. It is not involved in the protein synthesizing functions of that subunit. In Chlamydia abortus (strain DSM 27085 / S26/3) (Chlamydophila abortus), this protein is Large ribosomal subunit protein bL20.